The chain runs to 99 residues: Cytochrome c oxidase subunit 4 isoform 1, mitochondrial (99 aa).

The Mitochondrial matrix segment spans residues 1-73 (SVVKSEDFTL…SFAEMNRRSN (73 aa)). Position 4 is an N6-acetyllysine; alternate (K4). K4 carries the post-translational modification N6-succinyllysine; alternate. N6-acetyllysine is present on K28. A phosphoserine mark is found at S31 and S33. The residue at position 35 (K35) is an N6-acetyllysine; alternate. N6-succinyllysine; alternate is present on K35. The residue at position 42 (K42) is an N6-acetyllysine. Residues 74–99 (EWKTVVGTAMFFIGITALVIMWEKLY) form a helical membrane-spanning segment.

It belongs to the cytochrome c oxidase IV family. Component of the cytochrome c oxidase (complex IV, CIV), a multisubunit enzyme composed of 14 subunits. The complex is composed of a catalytic core of 3 subunits MT-CO1, MT-CO2 and MT-CO3, encoded in the mitochondrial DNA, and 11 supernumerary subunits COX4I, COX5A, COX5B, COX6A, COX6B, COX6C, COX7A, COX7B, COX7C, COX8 and NDUFA4, which are encoded in the nuclear genome. The complex exists as a monomer or a dimer and forms supercomplexes (SCs) in the inner mitochondrial membrane with NADH-ubiquinone oxidoreductase (complex I, CI) and ubiquinol-cytochrome c oxidoreductase (cytochrome b-c1 complex, complex III, CIII), resulting in different assemblies (supercomplex SCI(1)III(2)IV(1) and megacomplex MCI(2)III(2)IV(2)). Interacts with PHB2; the interaction decreases in absence of SPHK2. Interacts with AFG1L. Interacts with ABCB7; this interaction allows the regulation of cellular iron homeostasis and cellular reactive oxygen species (ROS) levels in cardiomyocytes. Interacts with FLVCR2; this interaction occurs in the absence of heme and is disrupted upon heme binding. Interacts with IRGC.

The protein resides in the mitochondrion inner membrane. It participates in energy metabolism; oxidative phosphorylation. In terms of biological role, component of the cytochrome c oxidase, the last enzyme in the mitochondrial electron transport chain which drives oxidative phosphorylation. The respiratory chain contains 3 multisubunit complexes succinate dehydrogenase (complex II, CII), ubiquinol-cytochrome c oxidoreductase (cytochrome b-c1 complex, complex III, CIII) and cytochrome c oxidase (complex IV, CIV), that cooperate to transfer electrons derived from NADH and succinate to molecular oxygen, creating an electrochemical gradient over the inner membrane that drives transmembrane transport and the ATP synthase. Cytochrome c oxidase is the component of the respiratory chain that catalyzes the reduction of oxygen to water. Electrons originating from reduced cytochrome c in the intermembrane space (IMS) are transferred via the dinuclear copper A center (CU(A)) of subunit 2 and heme A of subunit 1 to the active site in subunit 1, a binuclear center (BNC) formed by heme A3 and copper B (CU(B)). The BNC reduces molecular oxygen to 2 water molecules using 4 electrons from cytochrome c in the IMS and 4 protons from the mitochondrial matrix. The sequence is that of Cytochrome c oxidase subunit 4 isoform 1, mitochondrial (COX4I1) from Mandrillus sphinx (Mandrill).